Here is a 146-residue protein sequence, read N- to C-terminus: Acidic phospholipase A2 S14-72F (146 aa).

An N-terminal signal peptide occupies residues 1-19 (MYPAHLLVLLAVCVSLLGA). A propeptide spanning residues 20–27 (ASIPPQPL) is cleaved from the precursor. Cystine bridges form between Cys38–Cys98, Cys54–Cys145, Cys56–Cys72, Cys71–Cys126, Cys78–Cys119, Cys87–Cys112, and Cys105–Cys117. Residues Tyr55, Gly57, and Gly59 each coordinate Ca(2+). The active site involves His75. Ca(2+) is bound at residue Asp76. Asp120 is an active-site residue.

Belongs to the phospholipase A2 family. Group I subfamily. D49 sub-subfamily. Ca(2+) is required as a cofactor. Expressed by the venom gland.

It localises to the secreted. The enzyme catalyses a 1,2-diacyl-sn-glycero-3-phosphocholine + H2O = a 1-acyl-sn-glycero-3-phosphocholine + a fatty acid + H(+). Its function is as follows. Snake venom phospholipase A2 (PLA2) that inhibits collagen-induced platelet aggregation. PLA2 catalyzes the calcium-dependent hydrolysis of the 2-acyl groups in 3-sn-phosphoglycerides. This Austrelaps superbus (Lowland copperhead snake) protein is Acidic phospholipase A2 S14-72F.